The chain runs to 588 residues: Progranulin (588 aa).

Positions 1 to 17 (MWILVSWLALVARLVAG) are cleaved as a signal peptide. N-linked (GlcNAc...) asparagine glycosylation occurs at N38. Disulfide bonds link C125–C138, C132–C148, C281–C293, C287–C303, C294–C311, C304–C318, C312–C325, C319–C332, C363–C375, C369–C385, C394–C407, and C401–C413. Residue N372 is glycosylated (N-linked (GlcNAc...) asparagine). A glycan (N-linked (GlcNAc...) asparagine) is linked at N525.

It belongs to the granulin family. In terms of assembly, progranulin is secreted as a homodimer. Interacts with SLPI; interaction protects progranulin from proteolysis. Interacts (via region corresponding to granulin-7 peptide) with CTSD; stabilizes CTSD and increases its proteolytic activity. Interacts (via region corresponding to granulin-7 peptide) with SORT1; this interaction mediates endocytosis and lysosome delivery of progranulin; interaction occurs at the neuronal cell surface in a stressed nervous system. Interacts with PSAP; facilitates lysosomal delivery of progranulin from the extracellular space and the biosynthetic pathway. Forms a complex with PSAP and M6PR; PSAP bridges the binding between progranulin and M6PR. Forms a complex with PSAP and SORT1; progranulin bridges the interaction between PSAP and SORT1; facilitates lysosomal targeting of PSAP via SORT1; interaction enhances PSAP uptake in primary cortical neurons. Interacts (via regions corresponding to granulin-2 and granulin-7 peptides) with GBA1; this interaction prevents aggregation of GBA1-SCARB2 complex via interaction with HSPA1A upon stress. Interacts (via region corresponding to granulin-7 peptide) with HSPA1A; mediates recruitment of HSPA1A to GBA1 and prevents GBA1 aggregation in response to stress. In terms of processing, cleaved by ELANE; proteolysis is blocked by SLPI and is concentration- and time-dependent and induces CXCL8/IL-8 production; granulin-3 and granulin-4 are resistant to ELANE. Cleaved by CTSL in lysosome thus regulating the maturation and turnover of progranulin within the lysosome. Ubiquitous; most abundant in the spleen and several tissues of endocrine significance.

It is found in the secreted. The protein localises to the lysosome. Its function is as follows. Secreted protein that acts as a key regulator of lysosomal function and as a growth factor involved in inflammation, wound healing and cell proliferation. Regulates protein trafficking to lysosomes, and also the activity of lysosomal enzymes. Also facilitates the acidification of lysosomes, causing degradation of mature CTSD by CTSB. In addition, functions as a wound-related growth factor that acts directly on dermal fibroblasts and endothelial cells to promote division, migration and the formation of capillary-like tubule structures. Also promotes epithelial cell proliferation by blocking TNF-mediated neutrophil activation preventing release of oxidants and proteases. Moreover, modulates inflammation in neurons by preserving neurons survival, axonal outgrowth and neuronal integrity. In terms of biological role, inhibits epithelial cell proliferation and induces epithelial cells to secrete IL-8. Functionally, stabilizes CTSD through interaction with CTSD leading to maintain its aspartic-type peptidase activity. This Rattus norvegicus (Rat) protein is Progranulin (Grn).